A 118-amino-acid chain; its full sequence is Large ribosomal subunit protein bL20 (118 aa).

Belongs to the bacterial ribosomal protein bL20 family.

In terms of biological role, binds directly to 23S ribosomal RNA and is necessary for the in vitro assembly process of the 50S ribosomal subunit. It is not involved in the protein synthesizing functions of that subunit. The polypeptide is Large ribosomal subunit protein bL20 (Ralstonia pickettii (strain 12J)).